Reading from the N-terminus, the 718-residue chain is Receptor-like protein 36 (718 aa).

Residues 1 to 26 (MIRSLSYCFLTIYFFLSILPLPNTIA) form the signal peptide. Residues 27–695 (CPTRLLCRSD…SESEDQLLNW (669 aa)) lie on the Extracellular side of the membrane. LRR repeat units lie at residues 70–94 (DAIL…IGNL), 95–118 (SHLT…IGNL), 120–141 (QLES…SFAN), 143–165 (TKLS…LANL), 166–188 (TSLS…DLSG), 189–213 (LHNL…LLMI), 214–238 (PSLV…TFSL), 239–261 (SRLR…SISK), 262–286 (LVNL…ISKV), 288–310 (NLTS…VWRS), 312–334 (KLDY…EVID), 335–359 (GASL…ICKV), 360–383 (KDLY…LKYS), 384–406 (TYFH…LFIK), 407–431 (DSQL…LINC), 433–454 (RIEF…WLGS), 455–480 (LPYL…AYLG), and 481–505 (FPSI…YFAN). Asn-93 is a glycosylation site (N-linked (GlcNAc...) asparagine). Asn-141 and Asn-164 each carry an N-linked (GlcNAc...) asparagine glycan. N-linked (GlcNAc...) asparagine glycosylation is present at Asn-199. Residue Asn-288 is glycosylated (N-linked (GlcNAc...) asparagine). Asn-373 and Asn-393 each carry an N-linked (GlcNAc...) asparagine glycan. Asn-528 carries an N-linked (GlcNAc...) asparagine glycan. LRR repeat units follow at residues 550-574 (FEGF…IGLL), 575-598 (SELR…LANI), 599-622 (TNLE…LGKL), and 624-647 (FLSN…QFAT). Residues Asn-581, Asn-597, Asn-610, Asn-629, and Asn-649 are each glycosylated (N-linked (GlcNAc...) asparagine). Residues 696 to 716 (IAAAIAFGPGMFCGLVIGHIF) form a helical membrane-spanning segment. Over 717–718 (TS) the chain is Cytoplasmic.

This sequence belongs to the RLP family.

It localises to the cell membrane. The protein is Receptor-like protein 36 of Arabidopsis thaliana (Mouse-ear cress).